A 171-amino-acid polypeptide reads, in one-letter code: Protein BTG1 (171 aa).

Phosphoserine is present on Ser159.

This sequence belongs to the BTG family. Interacts with CNOT7 and CNOT8.

Functionally, anti-proliferative protein. The polypeptide is Protein BTG1 (Btg1) (Rattus norvegicus (Rat)).